Here is a 619-residue protein sequence, read N- to C-terminus: 1-deoxy-D-xylulose-5-phosphate synthase (619 aa).

Thiamine diphosphate is bound by residues His63 and 104–106; that span reads GHS. Mg(2+) is bound at residue Asp136. Residues 137–138, Asn165, Tyr272, and Glu353 each bind thiamine diphosphate; that span reads GS. A Mg(2+)-binding site is contributed by Asn165.

The protein belongs to the transketolase family. DXPS subfamily. As to quaternary structure, homodimer. It depends on Mg(2+) as a cofactor. Thiamine diphosphate serves as cofactor.

The catalysed reaction is D-glyceraldehyde 3-phosphate + pyruvate + H(+) = 1-deoxy-D-xylulose 5-phosphate + CO2. Its pathway is metabolic intermediate biosynthesis; 1-deoxy-D-xylulose 5-phosphate biosynthesis; 1-deoxy-D-xylulose 5-phosphate from D-glyceraldehyde 3-phosphate and pyruvate: step 1/1. Functionally, catalyzes the acyloin condensation reaction between C atoms 2 and 3 of pyruvate and glyceraldehyde 3-phosphate to yield 1-deoxy-D-xylulose-5-phosphate (DXP). This is 1-deoxy-D-xylulose-5-phosphate synthase from Wolinella succinogenes (strain ATCC 29543 / DSM 1740 / CCUG 13145 / JCM 31913 / LMG 7466 / NCTC 11488 / FDC 602W) (Vibrio succinogenes).